The following is a 409-amino-acid chain: MPKVTVLDVRLYGEPVSTLTNLQDGRTIFAFNEAYIEDEKRPTLSLSLKDPFGALITKFRPYNMVVPPFFSNLLPEGPLRKYLADRAGVKPSREFLLLWMLGRDLPGAVTVHPSEGDDAPPDDEQAIVEARPNALRFSLAGVQLKFSAFKNDKKGGGLTIPAEGTGGSWIVKLPSQQYSGVPENEFAMMTIARMMGMDVPELQLVDLDAVSGLPQGVGELHGQALAIKRFDRTPEGAVHIEDFAQVFGVFPDHKYDKGNYRMIGRVLGIETSTADVAEFIRRLVFSTLIGNGDMHLKNWSLIYPDRRTPALSPAYDLLSTIPYIEGEDTAALNFSRTKKMAALSKDELAHLAAKAELSEKLVIDTARETVERFRAVWEAEKKNLPMAAKVADTIDTHAPTVELYREFAK.

Asp293 functions as the Proton acceptor in the catalytic mechanism.

This sequence belongs to the HipA Ser/Thr kinase family.

In Sinorhizobium fredii (strain NBRC 101917 / NGR234), this protein is Putative kinase Y4dM.